Here is a 311-residue protein sequence, read N- to C-terminus: Pantothenate synthetase (311 aa).

43–50 lines the ATP pocket; the sequence is MGALHEGH. His50 acts as the Proton donor in catalysis. Gln75 contacts (R)-pantoate. Gln75 contacts beta-alanine. Residue 161–164 participates in ATP binding; the sequence is GEKD. Gln167 contacts (R)-pantoate. Residues Val190 and 198–201 contribute to the ATP site; that span reads MSSR.

The protein belongs to the pantothenate synthetase family. As to quaternary structure, homodimer.

The protein localises to the cytoplasm. The catalysed reaction is (R)-pantoate + beta-alanine + ATP = (R)-pantothenate + AMP + diphosphate + H(+). The protein operates within cofactor biosynthesis; (R)-pantothenate biosynthesis; (R)-pantothenate from (R)-pantoate and beta-alanine: step 1/1. In terms of biological role, catalyzes the condensation of pantoate with beta-alanine in an ATP-dependent reaction via a pantoyl-adenylate intermediate. The chain is Pantothenate synthetase from Mycolicibacterium vanbaalenii (strain DSM 7251 / JCM 13017 / BCRC 16820 / KCTC 9966 / NRRL B-24157 / PYR-1) (Mycobacterium vanbaalenii).